The following is a 383-amino-acid chain: Putative glutamate--cysteine ligase 2-2 (383 aa).

A disordered region spans residues 35-56; it reads RGDRDGAGGPPGGADPDGDLDG.

Belongs to the glutamate--cysteine ligase type 2 family. YbdK subfamily.

It carries out the reaction L-cysteine + L-glutamate + ATP = gamma-L-glutamyl-L-cysteine + ADP + phosphate + H(+). In terms of biological role, ATP-dependent carboxylate-amine ligase which exhibits weak glutamate--cysteine ligase activity. This Frankia alni (strain DSM 45986 / CECT 9034 / ACN14a) protein is Putative glutamate--cysteine ligase 2-2.